Here is an 817-residue protein sequence, read N- to C-terminus: Protein kintoun (817 aa).

Disordered regions lie at residues 233–259 (AESTARSPASPAPKAVQRPEPTEPRCS), 385–404 (AGAREESADSSGADHGRKSC), 410–445 (AGTAKAEGELVPEPEQDFGGDSVTPLGPGEGTTPEN), and 473–503 (VQTSEEQEGTCHDTSGSDMGGPGTESIKPLC). Residues 386–401 (GAREESADSSGADHGR) show a composition bias toward basic and acidic residues. Phosphoserine is present on residues serine 622 and serine 631. The segment at 653–692 (ECSDPDGLQGKEKGVKEECPLSEKENTEHSTTSTADSNSS) is disordered. Residues 661-680 (QGKEKGVKEECPLSEKENTE) show a composition bias toward basic and acidic residues. The span at 681 to 692 (HSTTSTADSNSS) shows a compositional bias: polar residues.

This sequence belongs to the PIH1 family. Kintoun subfamily. As to quaternary structure, interacts with CFAP300. Interacts with DNAI2 and HSPA1A. Interacts with DNAAF4. Interacts with DNAAF6/PIH1D3.

The protein resides in the cytoplasm. Its subcellular location is the dynein axonemal particle. In terms of biological role, required for cytoplasmic pre-assembly of axonemal dyneins, thereby playing a central role in motility in cilia and flagella. Involved in pre-assembly of dynein arm complexes in the cytoplasm before intraflagellar transport loads them for the ciliary compartment. The sequence is that of Protein kintoun from Rattus norvegicus (Rat).